The sequence spans 220 residues: MDFKAIAQQTAQEVLGYNRDTSGWKVVKTSKKITVSSKASRKFHGNLYRVEGIIPESPAKLSDFLYQTGDRITWDKSLQVYNMVHRIDSDTFICHTITQSFAVGSISPRDFIDLVYIKRYEGNMNIISSKSVDFPEYPPSSNYIRGYNHPCGFVCSPMEENPAYSKLVMFVQTEMRGKLSPSIIEKTMPSNLVNFILNAKDGIKAHRTPSRRGFHHNSHS.

One can recognise an START domain in the interval 1-208 (MDFKAIAQQT…AKDGIKAHRT (208 aa)).

In terms of biological role, may be involved in the intracellular transport of sterols or other lipids. May bind cholesterol or other sterols. The polypeptide is StAR-related lipid transfer protein 6 (STARD6) (Homo sapiens (Human)).